The primary structure comprises 155 residues: Small ribosomal subunit protein bS6 (155 aa).

A disordered region spans residues 94 to 155; that stretch reads EKHEEGPSAM…RPRRPREDRV (62 aa).

The protein belongs to the bacterial ribosomal protein bS6 family.

Its function is as follows. Binds together with bS18 to 16S ribosomal RNA. In Rhizobium johnstonii (strain DSM 114642 / LMG 32736 / 3841) (Rhizobium leguminosarum bv. viciae), this protein is Small ribosomal subunit protein bS6.